The primary structure comprises 94 residues: Secretoglobin family 1C member 1 (94 aa).

Positions 1-22 are cleaved as a signal peptide; sequence MKGSSALLVALTVLCICGLTRA.

This sequence belongs to the secretoglobin family. Expressed in the olfactory mucosa.

It is found in the secreted. This Rattus norvegicus (Rat) protein is Secretoglobin family 1C member 1 (Scgb1c1).